We begin with the raw amino-acid sequence, 685 residues long: Serine/threonine-protein kinase PLK2 (685 aa).

The disordered stretch occupies residues 24–71; that stretch reads KGCGADSKKKRPPQPPEESQPPQSQAQVPPAAAHHHHHHSHSGPEISR. Residues 43-55 show a composition bias toward low complexity; it reads QPPQSQAQVPPAA. Residues 82 to 334 form the Protein kinase domain; that stretch reads YCRGKVLGKG…LDDIIRHDFF (253 aa). Residues 88–96 and lysine 111 each bind ATP; that span reads LGKGGFAKC. The Proton acceptor role is filled by aspartate 205. Threonine 239 is modified (phosphothreonine). Residues 406-433 form a disordered region; it reads SITQQPSKHRTDEELQPPTTTVARSGTP. 2 consecutive POLO box domains span residues 503-581 and 601-685; these read WVTK…YMEE and YLLQ…QRCN.

This sequence belongs to the protein kinase superfamily. Ser/Thr protein kinase family. CDC5/Polo subfamily. As to quaternary structure, interacts with NSF; causing NSF dissociation from GRIA2. Interacts with CIB1. Catalytic activity is enhanced by phosphorylation of Thr-239.

The protein resides in the cytoplasm. It localises to the cytoskeleton. Its subcellular location is the microtubule organizing center. It is found in the centrosome. The protein localises to the centriole. The protein resides in the cell projection. It localises to the dendrite. It carries out the reaction L-seryl-[protein] + ATP = O-phospho-L-seryl-[protein] + ADP + H(+). It catalyses the reaction L-threonyl-[protein] + ATP = O-phospho-L-threonyl-[protein] + ADP + H(+). Activated by phosphorylation of Thr-239. Once activated, activity is stimulated by binding target proteins. Functionally, tumor suppressor serine/threonine-protein kinase involved in synaptic plasticity, centriole duplication and G1/S phase transition. Polo-like kinases act by binding and phosphorylating proteins that are already phosphorylated on a specific motif recognized by the POLO box domains. Phosphorylates CPAP, NPM1, RAPGEF2, RASGRF1, SNCA, SIPA1L1 and SYNGAP1. Plays a key role in synaptic plasticity and memory by regulating the Ras and Rap protein signaling: required for overactivity-dependent spine remodeling by phosphorylating the Ras activator RASGRF1 and the Rap inhibitor SIPA1L1 leading to their degradation by the proteasome. Conversely, phosphorylates the Rap activator RAPGEF2 and the Ras inhibitor SYNGAP1, promoting their activity. Also regulates synaptic plasticity independently of kinase activity, via its interaction with NSF that disrupts the interaction between NSF and the GRIA2 subunit of AMPARs, leading to a rapid rundown of AMPAR-mediated current that occludes long term depression. Required for procentriole formation and centriole duplication by phosphorylating CPAP and NPM1, respectively. Its induction by p53/TP53 suggests that it may participate in the mitotic checkpoint following stress. The chain is Serine/threonine-protein kinase PLK2 (PLK2) from Pongo abelii (Sumatran orangutan).